Reading from the N-terminus, the 809-residue chain is Phenylalanine--tRNA ligase beta subunit (809 aa).

One can recognise a tRNA-binding domain in the interval 39-152; sequence KDKWPNVYVG…ADAPVGMLAS (114 aa). The B5 domain occupies 404 to 492; sequence KDRNSVVLSL…RIAGYDTIPC (89 aa). 4 residues coordinate Mg(2+): Asp-470, Asp-476, Glu-479, and Glu-480. Residues 717 to 808 form the FDX-ACB domain; sequence NRFPSVERDL…LNTETGAVLR (92 aa).

It belongs to the phenylalanyl-tRNA synthetase beta subunit family. Type 1 subfamily. As to quaternary structure, tetramer of two alpha and two beta subunits. It depends on Mg(2+) as a cofactor.

The protein localises to the cytoplasm. It catalyses the reaction tRNA(Phe) + L-phenylalanine + ATP = L-phenylalanyl-tRNA(Phe) + AMP + diphosphate + H(+). This is Phenylalanine--tRNA ligase beta subunit from Dehalococcoides mccartyi (strain ATCC BAA-2266 / KCTC 15142 / 195) (Dehalococcoides ethenogenes (strain 195)).